Reading from the N-terminus, the 332-residue chain is Putative peptide import ATP-binding protein BMEII0206 (332 aa).

The 251-residue stretch at leucine 11–leucine 261 folds into the ABC transporter domain. Glycine 47–serine 54 serves as a coordination point for ATP.

The protein belongs to the ABC transporter superfamily. The complex is composed of two ATP-binding proteins (BMEII0205 and BMEII0206), two transmembrane proteins (BMEII0207/BMEII0208 and BMEII0209) and a solute-binding protein (BMEII0210).

The protein localises to the cell inner membrane. In terms of biological role, probably part of an ABC transporter complex that could be involved in peptide import. Probably responsible for energy coupling to the transport system. In Brucella melitensis biotype 1 (strain ATCC 23456 / CCUG 17765 / NCTC 10094 / 16M), this protein is Putative peptide import ATP-binding protein BMEII0206.